The following is a 163-amino-acid chain: Putative MucR family transcriptional regulatory protein RA0938 (163 aa).

Belongs to the ros/MucR family.

This Rhizobium meliloti (strain 1021) (Ensifer meliloti) protein is Putative MucR family transcriptional regulatory protein RA0938.